The sequence spans 141 residues: Hemoglobin subunit alpha (141 aa).

The region spanning 1-141 (VLSGTDKSNI…VSTVLTSKYR (141 aa)) is the Globin domain. Ser3 carries the phosphoserine modification. An N6-succinyllysine mark is found at Lys7 and Lys11. N6-acetyllysine; alternate is present on Lys16. N6-succinyllysine; alternate is present on Lys16. Tyr24 carries the phosphotyrosine modification. A Phosphoserine modification is found at Ser35. Residue Lys40 is modified to N6-succinyllysine. At Ser49 the chain carries Phosphoserine. His58 is a binding site for O2. His87 is a binding site for heme b. Ser102 carries the phosphoserine modification. Phosphothreonine is present on Thr108. Ser124 carries the phosphoserine modification. Phosphothreonine occurs at positions 134 and 137. Ser138 bears the Phosphoserine mark.

The protein belongs to the globin family. In terms of assembly, heterotetramer of two alpha chains and two beta chains. As to expression, red blood cells.

Its function is as follows. Involved in oxygen transport from the lung to the various peripheral tissues. In terms of biological role, hemopressin acts as an antagonist peptide of the cannabinoid receptor CNR1. Hemopressin-binding efficiently blocks cannabinoid receptor CNR1 and subsequent signaling. This is Hemoglobin subunit alpha (HBA) from Talpa europaea (European mole).